The primary structure comprises 297 residues: Large ribosomal subunit protein uL18 (297 aa).

The span at 258 to 267 (KKAHPKKRWT) shows a compositional bias: basic residues. Residues 258-277 (KKAHPKKRWTEKKLTREQRQ) are disordered. The span at 268 to 277 (EKKLTREQRQ) shows a compositional bias: basic and acidic residues.

This sequence belongs to the universal ribosomal protein uL18 family. In terms of assembly, component of the large ribosomal subunit (LSU).

It localises to the cytoplasm. The protein localises to the nucleus. Functionally, component of the ribosome, a large ribonucleoprotein complex responsible for the synthesis of proteins in the cell. The small ribosomal subunit (SSU) binds messenger RNAs (mRNAs) and translates the encoded message by selecting cognate aminoacyl-transfer RNA (tRNA) molecules. The large subunit (LSU) contains the ribosomal catalytic site termed the peptidyl transferase center (PTC), which catalyzes the formation of peptide bonds, thereby polymerizing the amino acids delivered by tRNAs into a polypeptide chain. The nascent polypeptides leave the ribosome through a tunnel in the LSU and interact with protein factors that function in enzymatic processing, targeting, and the membrane insertion of nascent chains at the exit of the ribosomal tunnel. The polypeptide is Large ribosomal subunit protein uL18 (RPL5A) (Helianthus annuus (Common sunflower)).